The sequence spans 289 residues: Mas-related G-protein coupled receptor member G (289 aa).

At M1–K13 the chain is on the extracellular side. The chain crosses the membrane as a helical span at residues V14–L34. At W35–H52 the chain is on the cytoplasmic side. The helical transmembrane segment at L53–V73 threads the bilayer. Residues S74 to D78 are Extracellular-facing. A helical membrane pass occupies residues T79 to F99. Residues S100 to R120 are Cytoplasmic-facing. A helical transmembrane segment spans residues F121–P141. At A142–S164 the chain is on the extracellular side. The chain crosses the membrane as a helical span at residues V165–F185. Residues G186 to K199 lie on the Cytoplasmic side of the membrane. Residues L200 to C220 traverse the membrane as a helical segment. Residues L221–R222 are Extracellular-facing. A helical transmembrane segment spans residues P223–D243. The Cytoplasmic portion of the chain corresponds to S244–V289.

Belongs to the G-protein coupled receptor 1 family. Mas subfamily.

The protein resides in the cell membrane. In terms of biological role, orphan receptor. May regulate nociceptor function and/or development, including the sensation or modulation of pain. This is Mas-related G-protein coupled receptor member G (Mrgprg) from Mus musculus (Mouse).